A 100-amino-acid chain; its full sequence is Glyceraldehyde-3-phosphate dehydrogenase, testis-specific (100 aa).

Residues Asp-39 and Thr-64 each coordinate NAD(+). Arg-89 serves as a coordination point for D-glyceraldehyde 3-phosphate.

It belongs to the glyceraldehyde-3-phosphate dehydrogenase family. As to quaternary structure, homotetramer.

The protein localises to the cytoplasm. It catalyses the reaction D-glyceraldehyde 3-phosphate + phosphate + NAD(+) = (2R)-3-phospho-glyceroyl phosphate + NADH + H(+). It participates in carbohydrate degradation; glycolysis; pyruvate from D-glyceraldehyde 3-phosphate: step 1/5. Its function is as follows. May play an important role in regulating the switch between different pathways for energy production during spermiogenesis and in the spermatozoon. Required for sperm motility and male fertility. The polypeptide is Glyceraldehyde-3-phosphate dehydrogenase, testis-specific (Mesocricetus auratus (Golden hamster)).